Consider the following 149-residue polypeptide: Large ribosomal subunit protein bL9 (149 aa).

Belongs to the bacterial ribosomal protein bL9 family.

In terms of biological role, binds to the 23S rRNA. The polypeptide is Large ribosomal subunit protein bL9 (Geobacillus thermodenitrificans (strain NG80-2)).